Consider the following 351-residue polypeptide: Photosystem II D2 protein (351 aa).

Residues 39-59 (CAFLALGGWLTGTTFVTSWYT) traverse the membrane as a helical segment. Residue His116 participates in chlorophyll a binding. The helical transmembrane segment at 123–139 (GFMLRQFEIARLVGIRP) threads the bilayer. Residues Gln128 and Asn141 each coordinate pheophytin a. A helical transmembrane segment spans residues 151-164 (VFVSVFLMYPLGQS). Residue His196 participates in chlorophyll a binding. A helical transmembrane segment spans residues 206 to 226 (GALLCAIHGATVENTLFEDGE). His213 and Phe260 together coordinate a plastoquinone. Residue His213 coordinates Fe cation. His267 provides a ligand contact to Fe cation. The helical transmembrane segment at 277 to 293 (GLWMSAVGIVGLALNLR) threads the bilayer.

This sequence belongs to the reaction center PufL/M/PsbA/D family. As to quaternary structure, PSII is composed of 1 copy each of membrane proteins PsbA, PsbB, PsbC, PsbD, PsbE, PsbF, PsbH, PsbI, PsbJ, PsbK, PsbL, PsbM, PsbT, PsbX, PsbY, PsbZ, Psb30/Ycf12, peripheral proteins PsbO, CyanoQ (PsbQ), PsbU, PsbV and a large number of cofactors. It forms dimeric complexes. Requires The D1/D2 heterodimer binds P680, chlorophylls that are the primary electron donor of PSII, and subsequent electron acceptors. It shares a non-heme iron and each subunit binds pheophytin, quinone, additional chlorophylls, carotenoids and lipids. There is also a Cl(-1) ion associated with D1 and D2, which is required for oxygen evolution. The PSII complex binds additional chlorophylls, carotenoids and specific lipids. as cofactor.

The protein resides in the cellular thylakoid membrane. The enzyme catalyses 2 a plastoquinone + 4 hnu + 2 H2O = 2 a plastoquinol + O2. Functionally, photosystem II (PSII) is a light-driven water:plastoquinone oxidoreductase that uses light energy to abstract electrons from H(2)O, generating O(2) and a proton gradient subsequently used for ATP formation. It consists of a core antenna complex that captures photons, and an electron transfer chain that converts photonic excitation into a charge separation. The D1/D2 (PsbA/PsbD) reaction center heterodimer binds P680, the primary electron donor of PSII as well as several subsequent electron acceptors. D2 is needed for assembly of a stable PSII complex. The sequence is that of Photosystem II D2 protein from Trichormus variabilis (strain ATCC 29413 / PCC 7937) (Anabaena variabilis).